A 104-amino-acid chain; its full sequence is Large ribosomal subunit protein uL24 (104 aa).

It belongs to the universal ribosomal protein uL24 family. Part of the 50S ribosomal subunit.

Functionally, one of two assembly initiator proteins, it binds directly to the 5'-end of the 23S rRNA, where it nucleates assembly of the 50S subunit. Its function is as follows. One of the proteins that surrounds the polypeptide exit tunnel on the outside of the subunit. The polypeptide is Large ribosomal subunit protein uL24 (Idiomarina loihiensis (strain ATCC BAA-735 / DSM 15497 / L2-TR)).